A 290-amino-acid polypeptide reads, in one-letter code: Outer dense fiber protein 4 (290 aa).

Serine 28 carries the phosphoserine modification. The next 4 membrane-spanning stretches (helical) occupy residues 44 to 64 (AQVV…LMVF), 132 to 152 (ISFI…HLPY), 164 to 184 (LIGI…LLLF), and 201 to 221 (IGWS…CGIL). Residues 262-290 (ADILDPTQDDQKPLSSDNIALPPNPDTTD) form a disordered region.

Its subcellular location is the membrane. Component of the outer dense fibers (ODF) of spermatozoa which could be involved in sperm tail structure, sperm movement and general organization of cellular cytoskeleton. This is Outer dense fiber protein 4 (Odf4) from Rattus norvegicus (Rat).